We begin with the raw amino-acid sequence, 104 residues long: Large ribosomal subunit protein bL21 (104 aa).

Belongs to the bacterial ribosomal protein bL21 family. In terms of assembly, part of the 50S ribosomal subunit. Contacts protein L20.

In terms of biological role, this protein binds to 23S rRNA in the presence of protein L20. In Streptococcus equi subsp. equi (strain 4047), this protein is Large ribosomal subunit protein bL21.